A 297-amino-acid polypeptide reads, in one-letter code: 6-dehydroglucose reductase (297 aa).

Trp20, Arg21, and Asp49 together coordinate NADP(+). The Proton donor role is filled by Tyr54. Residues Tyr54, Lys98, His129, and Arg130 each coordinate D-glucose. Residues Ser159, Asn160, Gln181, Ser211, Leu213, Gly215, Gly261, Thr262, Asn263, and Arg267 each coordinate NADP(+).

It belongs to the aldo/keto reductase family. In terms of assembly, homotrimer.

The enzyme catalyses D-glucose + NADP(+) = 6-dehydro-D-glucose + NADPH + H(+). Part of the sulfoquinovose monooxygenase (sulfo-SMO) pathway, a D-sulfoquinovose degradation pathway that enables the complete utilization of all carbons within sulfoquinovose (SQ) with concomitant production of inorganic sulfite. Catalyzes the NADP-dependent reduction of 6-dehydro-D-glucose to D-glucose. Cannot use NADH. In Agrobacterium fabrum (strain C58 / ATCC 33970) (Agrobacterium tumefaciens (strain C58)), this protein is 6-dehydroglucose reductase.